Consider the following 344-residue polypeptide: Methionine import ATP-binding protein MetN (344 aa).

The ABC transporter domain maps to isoleucine 2 to isoleucine 241. Glycine 38–serine 45 contacts ATP.

It belongs to the ABC transporter superfamily. Methionine importer (TC 3.A.1.24) family. In terms of assembly, the complex is composed of two ATP-binding proteins (MetN), two transmembrane proteins (MetI) and a solute-binding protein (MetQ).

The protein localises to the cell inner membrane. It catalyses the reaction L-methionine(out) + ATP + H2O = L-methionine(in) + ADP + phosphate + H(+). It carries out the reaction D-methionine(out) + ATP + H2O = D-methionine(in) + ADP + phosphate + H(+). Its function is as follows. Part of the ABC transporter complex MetNIQ involved in methionine import. Responsible for energy coupling to the transport system. This Burkholderia thailandensis (strain ATCC 700388 / DSM 13276 / CCUG 48851 / CIP 106301 / E264) protein is Methionine import ATP-binding protein MetN.